We begin with the raw amino-acid sequence, 239 residues long: Seed lectin beta chain (239 aa).

D-glucose is bound by residues Asp-88 and Gly-106. Glu-126 and Asp-128 together coordinate Mn(2+). 3 residues coordinate Ca(2+): Asp-128, Asn-132, and Asp-137. 2 residues coordinate Mn(2+): Asp-137 and His-142. Residues Gly-217 and Ala-218 each contribute to the D-glucose site.

It belongs to the leguminous lectin family. In terms of assembly, tetramer consisting of heterodimers of alpha and beta chains.

Galactose-binding lectin. Agglutinates human erythrocytes, and requires Ca(2+) and Mn(2+) ions for full agglutinating activity. Has antifungal activity against Fusarium sp., A.niger and A.flavus. In Spatholobus parviflorus (Butea parviflora), this protein is Seed lectin beta chain.